Consider the following 64-residue polypeptide: DNA-directed RNA polymerase subunit Rpo10 (64 aa).

Residues C7, C10, C45, and C46 each contribute to the Zn(2+) site.

The protein belongs to the archaeal Rpo10/eukaryotic RPB10 RNA polymerase subunit family. As to quaternary structure, part of the RNA polymerase complex. Requires Zn(2+) as cofactor.

It localises to the cytoplasm. It carries out the reaction RNA(n) + a ribonucleoside 5'-triphosphate = RNA(n+1) + diphosphate. In terms of biological role, DNA-dependent RNA polymerase (RNAP) catalyzes the transcription of DNA into RNA using the four ribonucleoside triphosphates as substrates. This Haloquadratum walsbyi (strain DSM 16790 / HBSQ001) protein is DNA-directed RNA polymerase subunit Rpo10.